Consider the following 297-residue polypeptide: Nuclear transcription factor Y subunit B-11 (297 aa).

The interval 1–25 (MKSRKSYGHLLSPVGSPPLDNESGE) is disordered. Residues 63-69 (LPIANVS) mediate DNA binding. Residues 90–101 (VQECVSEFISFV) form a subunit association domain (SAD) region.

The protein belongs to the NFYB/HAP3 subunit family. As to quaternary structure, heterotrimeric transcription factor composed of three components, NF-YA, NF-YB and NF-YC. NF-YB and NF-YC must interact and dimerize for NF-YA association and DNA binding. Interacts with NFYC2, NFYC4 and NFYC6. In terms of tissue distribution, expressed in roots, culms, nodes, leaf blades, leaf sheaths and young panicles.

The protein localises to the nucleus. The protein resides in the cytoplasm. Its function is as follows. Probable transcription factor involved in the regulation of flowering time under long day (LD) conditions. Functions as a repressor of flowering, independently of HD1 and GHD7. Controls flowering time by negatively regulating the expression of EHD1 and HD3A. Regulates plant height by promoting cell elongation in the internodes. Component of the NF-Y/HAP transcription factor complex. The chain is Nuclear transcription factor Y subunit B-11 (HD5) from Oryza sativa subsp. japonica (Rice).